The chain runs to 208 residues: Endo-1,4-beta-xylanase B (208 aa).

Positions 1-16 (MKVTAAFAGLLATTLA) are cleaved as a signal peptide. A GH11 domain is found at 17–207 (APATELVTRS…GTGTASVTVS (191 aa)). The active-site Nucleophile is the E101. The active-site Proton donor is E194.

This sequence belongs to the glycosyl hydrolase 11 (cellulase G) family.

It is found in the secreted. The catalysed reaction is Endohydrolysis of (1-&gt;4)-beta-D-xylosidic linkages in xylans.. The protein operates within glycan degradation; xylan degradation. With respect to regulation, N-bromosuccinimide completely inhibits the catalytic activity. Functionally, endo-1,4-beta-xylanase involved in the hydrolysis of xylan, a major structural heterogeneous polysaccharide found in plant biomass representing the second most abundant polysaccharide in the biosphere, after cellulose. This is Endo-1,4-beta-xylanase B (xynB) from Talaromyces purpureogenus (Soft rot fungus).